The chain runs to 64 residues: Disintegrin (64 aa).

A Disintegrin domain is found at 1–64; sequence NSVHPCCDPV…SDCPRNRYNH (64 aa). Disulfide bonds link C6/C29, C20/C26, C25/C50, and C38/C57. The Cell attachment site; atypical (MLD) motif lies at 42–44; the sequence is MLD.

It belongs to the disintegrin family. Dimeric disintegrin subfamily. As to quaternary structure, heterodimer; disulfide-linked. Expressed by the venom gland.

The protein resides in the secreted. Its function is as follows. Inhibits adhesion of cells expressing alpha-4/beta-1 (ITGA4/ITGB1) and alpha-4/beta-7 (ITGA4/ITGB7) integrins to the natural ligands vascular cell adhesion molecule 1 (VCAM-1) and mucosal addressin cell adhesion molecule 1 (MADCAM-1). This chain is Disintegrin, found in Echis carinatus (Saw-scaled viper).